The chain runs to 209 residues: Glutathione S-transferase 1-1 (209 aa).

A GST N-terminal domain is found at 1 to 81; the sequence is MADFYYLPGS…YLVEKYGKTD (81 aa). Glutathione is bound by residues serine 10, 51–53, and 65–67; these read HTI and ESR. Residues 87 to 209 form the GST C-terminal domain; sequence CPKKRAVINQ…GCLEFKKFFE (123 aa).

The protein belongs to the GST superfamily. Theta family. In terms of assembly, homodimer.

The enzyme catalyses RX + glutathione = an S-substituted glutathione + a halide anion + H(+). It carries out the reaction 1,1,1-trichloro-2,2-bis(4-chlorophenyl)ethane = 1,1-dichloro-2,2-bis(4-chlorophenyl)ethylene + chloride + H(+). Conjugation of reduced glutathione to a wide number of exogenous and endogenous hydrophobic electrophiles. Has DDT dehydrochlorinase activity. The chain is Glutathione S-transferase 1-1 (GstD1) from Drosophila sechellia (Fruit fly).